The following is a 380-amino-acid chain: Serpin B7 (380 aa).

S217 is subject to Phosphoserine.

This sequence belongs to the serpin family. Ov-serpin subfamily.

The protein localises to the cytoplasm. In terms of biological role, might function as an inhibitor of Lys-specific proteases. Might influence the maturation of megakaryocytes via its action as a serpin. The polypeptide is Serpin B7 (Serpinb7) (Mus musculus (Mouse)).